The following is a 185-amino-acid chain: Elongation factor P (185 aa).

The protein belongs to the elongation factor P family.

It is found in the cytoplasm. It participates in protein biosynthesis; polypeptide chain elongation. In terms of biological role, involved in peptide bond synthesis. Stimulates efficient translation and peptide-bond synthesis on native or reconstituted 70S ribosomes in vitro. Probably functions indirectly by altering the affinity of the ribosome for aminoacyl-tRNA, thus increasing their reactivity as acceptors for peptidyl transferase. The sequence is that of Elongation factor P from Methylobacillus flagellatus (strain ATCC 51484 / DSM 6875 / VKM B-1610 / KT).